Here is a 311-residue protein sequence, read N- to C-terminus: MDTTVPTFSLAELQQGLHQDEFRRCLRDKGLFYLTDCGLTDTELKSAKDLVIDFFEHGSEAEKRAVTSPVPTMRRGFTGLESESTAQITNTGSYSDYSMCYSMGTADNLFPSGDFERIWTQYFDRQYTASRAVAREVLRATGTEPDGGVEAFLDCEPLLRFRYFPQVPEHRSAEEQPLRMAPHYDLSMVTLIQQTPCANGFVSLQAEVGGAFTDLPYRPDAVLVFCGAIATLVTGGQVKAPRHHVAAPRRDQIAGSSRTSSVFFLRPNADFTFSVPLARECGFDVSLDGETATFQDWIGGNYVNIRRTSKA.

The region spanning 154-267 (DCEPLLRFRY…RTSSVFFLRP (114 aa)) is the Fe2OG dioxygenase domain.

The protein belongs to the iron/ascorbate-dependent oxidoreductase family. Fe cation is required as a cofactor. The cofactor is L-ascorbate.

The catalysed reaction is penicillin N + 2-oxoglutarate + O2 = deacetoxycephalosporin C + succinate + CO2 + H2O. The protein operates within antibiotic biosynthesis; cephalosporin C biosynthesis. Functionally, catalyzes the step from penicillin N to deacetoxy-cephalosporin C. This chain is Deacetoxycephalosporin C synthase (cefE), found in Streptomyces clavuligerus.